A 186-amino-acid polypeptide reads, in one-letter code: Large ribosomal subunit protein uL15 (186 aa).

Residues 1–48 (MDLSSLRPAKGAVKARKRVGRGPGSGNGTTAGKGNKGQQSRSGYQRPV) form a disordered region. Positions 21–35 (RGPGSGNGTTAGKGN) are enriched in gly residues.

The protein belongs to the universal ribosomal protein uL15 family. Part of the 50S ribosomal subunit.

Functionally, binds to the 23S rRNA. This is Large ribosomal subunit protein uL15 from Chlorobaculum tepidum (strain ATCC 49652 / DSM 12025 / NBRC 103806 / TLS) (Chlorobium tepidum).